The chain runs to 454 residues: Cerebellar degeneration-related protein 2 (454 aa).

Coiled-coil stretches lie at residues 44–142 (ELED…SGQG) and 192–265 (EEEN…QSEH). The disordered stretch occupies residues 134-153 (EELKSSGQGRRSPGKCDQEK). A Phosphoserine modification is found at Ser-311. A coiled-coil region spans residues 346-380 (LHEVDTQYSALKVKYEELLKKCQEEQDSLSHKAVQ).

It belongs to the CDR2 family.

The chain is Cerebellar degeneration-related protein 2 (CDR2) from Homo sapiens (Human).